We begin with the raw amino-acid sequence, 354 residues long: Type II secretion system protein K (354 aa).

The propeptide at 1–7 is leader sequence; that stretch reads MSRRQRG. Residues 8–28 traverse the membrane as a helical segment; sequence VALLIVMLMLSLMVTIAASIT. At 29 to 354 the chain is on the periplasmic side; the sequence is ERSGKAWQRT…QYGGYRTVNP (326 aa). The segment at 114–151 is disordered; sequence NVTPNNASGNNTSGNNNAANGSSGNGNSPQPPKVGTSE. Positions 118–141 are enriched in low complexity; that stretch reads NNASGNNTSGNNNAANGSSGNGNS.

Belongs to the GSP K family. Type II secretion is composed of four main components: the outer membrane complex, the inner membrane complex, the cytoplasmic secretion ATPase and the periplasm-spanning pseudopilus. Interacts with core component OutG. In terms of processing, cleaved by prepilin peptidase.

The protein localises to the cell inner membrane. Component of the type II secretion system required for the energy-dependent secretion of extracellular factors such as proteases and toxins from the periplasm. Plays a role in pseudopilus assembly and seems to control its length. Interacts with the pseudopilus tip complex that is critical for the recognition and binding of secretion substrates. This is Type II secretion system protein K (outK) from Dickeya chrysanthemi (Pectobacterium chrysanthemi).